A 141-amino-acid polypeptide reads, in one-letter code: Large-conductance mechanosensitive channel (141 aa).

Helical transmembrane passes span 16 to 36, 40 to 60, and 86 to 106; these read VIDL…VDSV, LIMP…MFIV, and GNFL…FLMV.

This sequence belongs to the MscL family. Homopentamer.

The protein localises to the cell inner membrane. Channel that opens in response to stretch forces in the membrane lipid bilayer. May participate in the regulation of osmotic pressure changes within the cell. The protein is Large-conductance mechanosensitive channel of Cupriavidus necator (strain ATCC 17699 / DSM 428 / KCTC 22496 / NCIMB 10442 / H16 / Stanier 337) (Ralstonia eutropha).